We begin with the raw amino-acid sequence, 341 residues long: Anthranilate phosphoribosyltransferase (341 aa).

Residues G79, 82-83 (GD), T87, 89-92 (NIST), 107-115 (KHGNRAVSS), and S119 contribute to the 5-phospho-alpha-D-ribose 1-diphosphate site. Residue G79 coordinates anthranilate. Residue S91 coordinates Mg(2+). Residue N110 participates in anthranilate binding. R165 is an anthranilate binding site. 2 residues coordinate Mg(2+): D224 and E225.

The protein belongs to the anthranilate phosphoribosyltransferase family. As to quaternary structure, homodimer. It depends on Mg(2+) as a cofactor.

The catalysed reaction is N-(5-phospho-beta-D-ribosyl)anthranilate + diphosphate = 5-phospho-alpha-D-ribose 1-diphosphate + anthranilate. It functions in the pathway amino-acid biosynthesis; L-tryptophan biosynthesis; L-tryptophan from chorismate: step 2/5. Its function is as follows. Catalyzes the transfer of the phosphoribosyl group of 5-phosphorylribose-1-pyrophosphate (PRPP) to anthranilate to yield N-(5'-phosphoribosyl)-anthranilate (PRA). The protein is Anthranilate phosphoribosyltransferase of Bacillus cereus (strain G9842).